Reading from the N-terminus, the 219-residue chain is 7-cyano-7-deazaguanine synthase (219 aa).

An ATP-binding site is contributed by 10–20 (FSGGQDSTTCL). 4 residues coordinate Zn(2+): Cys-186, Cys-195, Cys-198, and Cys-201.

It belongs to the QueC family. Homodimer. Zn(2+) serves as cofactor.

The enzyme catalyses 7-carboxy-7-deazaguanine + NH4(+) + ATP = 7-cyano-7-deazaguanine + ADP + phosphate + H2O + H(+). The protein operates within purine metabolism; 7-cyano-7-deazaguanine biosynthesis. Its function is as follows. Catalyzes the ATP-dependent conversion of 7-carboxy-7-deazaguanine (CDG) to 7-cyano-7-deazaguanine (preQ(0)). This is 7-cyano-7-deazaguanine synthase from Bacillus licheniformis (strain ATCC 14580 / DSM 13 / JCM 2505 / CCUG 7422 / NBRC 12200 / NCIMB 9375 / NCTC 10341 / NRRL NRS-1264 / Gibson 46).